The chain runs to 248 residues: Oligo(A)/oligo(T)-binding protein (248 aa).

The DNA-binding element occupies 1 to 36 (MAKTLAQGRKPGSGRKPGKGKTLREGRKPGSGRRRR). Disordered stretches follow at residues 1 to 127 (MAKT…LQQQ) and 219 to 248 (TAAS…NATI). A run of 3 repeats spans residues 8-12 (GRKPG), 14-18 (GRKPG), and 26-30 (GRKPG). Residues 8-30 (GRKPGSGRKPGKGKTLREGRKPG) are 3 X 5 AA repeats of G-R-K-P-G. Basic residues predominate over residues 12 to 21 (GSGRKPGKGK). The span at 37 to 71 (QDTGGKETDGSQQDQESRLISSRDMEAVDALRELT) shows a compositional bias: basic and acidic residues. 2 stretches are compositionally biased toward low complexity: residues 72–100 (HSPS…LPPS) and 111–127 (QQQQ…LQQQ).

Binds as a dimer or higher oligomer.

DNA-binding protein that recognizes oligo(A).oligo(T) tracts (A.T DNA). Can bind to any 11 bp sequence in which 10 bases conform to an uninterrupted oligo(A).oligo(T) tract. This chain is Oligo(A)/oligo(T)-binding protein (DAT1), found in Saccharomyces cerevisiae (strain ATCC 204508 / S288c) (Baker's yeast).